Here is a 220-residue protein sequence, read N- to C-terminus: Small ribosomal subunit protein uS2 (220 aa).

The protein belongs to the universal ribosomal protein uS2 family.

This chain is Small ribosomal subunit protein uS2, found in Methanococcus maripaludis (strain C5 / ATCC BAA-1333).